Reading from the N-terminus, the 309-residue chain is Small ribosomal subunit biogenesis GTPase RsgA (309 aa).

Residues 64–225 (ENELVRPPLA…VADTPGFSTY (162 aa)) form the CP-type G domain. Residues 113–116 (SKTD) and 168–176 (GQTGAGKST) contribute to the GTP site. Zn(2+)-binding residues include C249, C254, H256, and C262.

Belongs to the TRAFAC class YlqF/YawG GTPase family. RsgA subfamily. In terms of assembly, monomer. Associates with 30S ribosomal subunit, binds 16S rRNA. It depends on Zn(2+) as a cofactor.

The protein resides in the cytoplasm. In terms of biological role, one of several proteins that assist in the late maturation steps of the functional core of the 30S ribosomal subunit. Helps release RbfA from mature subunits. May play a role in the assembly of ribosomal proteins into the subunit. Circularly permuted GTPase that catalyzes slow GTP hydrolysis, GTPase activity is stimulated by the 30S ribosomal subunit. This is Small ribosomal subunit biogenesis GTPase RsgA from Pediococcus pentosaceus (strain ATCC 25745 / CCUG 21536 / LMG 10740 / 183-1w).